The primary structure comprises 65 residues: Beta-toxin Tf4a (65 aa).

An LCN-type CS-alpha/beta domain is found at 2–63 (KEGYPADSKG…VWDSATNKCG (62 aa)). Disulfide bonds link Cys12–Cys62, Cys16–Cys38, Cys24–Cys43, and Cys28–Cys45. The residue at position 62 (Cys62) is a Cysteine amide.

It belongs to the long (4 C-C) scorpion toxin superfamily. Sodium channel inhibitor family. Alpha subfamily. Expressed by the venom gland.

Its subcellular location is the secreted. In terms of biological role, alpha toxins bind voltage-independently at site-3 of sodium channels (Nav) and inhibit the inactivation of the activated channels, thereby blocking neuronal transmission. This toxin is toxic to frogs but non-toxic to insect larvae (T.molitor), mammals (rats) and crustaceans (crabs) at the doses assayed. The protein is Beta-toxin Tf4a of Tityus fasciolatus (Central Brazilian scorpion).